A 42-amino-acid polypeptide reads, in one-letter code: F420-non-reducing hydrogenase vhu subunit U (42 aa).

Residues Sec-21 and Cys-24 each contribute to the Ni(2+) site. A non-standard amino acid (selenocysteine) is located at residue Sec-21. Positions 28–42 (VLDRVKFRIERKDED) are cleaved as a propeptide — removed in mature form.

This sequence belongs to the [NiFe]/[NiFeSe] hydrogenase large subunit family. The F420-non-reducing hydrogenase vhu is composed of four subunits; VhuA, VhuD, VhuG and VhuU. Ni(2+) is required as a cofactor.

The polypeptide is F420-non-reducing hydrogenase vhu subunit U (vhuU) (Methanopyrus kandleri (strain AV19 / DSM 6324 / JCM 9639 / NBRC 100938)).